Consider the following 365-residue polypeptide: Peptide chain release factor 2 (365 aa).

Residue Q252 is modified to N5-methylglutamine.

This sequence belongs to the prokaryotic/mitochondrial release factor family. In terms of processing, methylated by PrmC. Methylation increases the termination efficiency of RF2.

The protein localises to the cytoplasm. Functionally, peptide chain release factor 2 directs the termination of translation in response to the peptide chain termination codons UGA and UAA. The polypeptide is Peptide chain release factor 2 (Yersinia pseudotuberculosis serotype O:1b (strain IP 31758)).